The following is a 484-amino-acid chain: Regulatory protein ViaA (484 aa).

Belongs to the ViaA family. Homodimer. Interacts with RavA.

The protein resides in the cytoplasm. Its function is as follows. Component of the RavA-ViaA chaperone complex, which may act on the membrane to optimize the function of some of the respiratory chains. ViaA stimulates the ATPase activity of RavA. The polypeptide is Regulatory protein ViaA (Edwardsiella ictaluri (strain 93-146)).